We begin with the raw amino-acid sequence, 547 residues long: MAAKDVKFGDSARKKMLVGVNVLADAVKATLGPKGRNVVLAKSFGAPTITKDGVSVAKEIELKDAFENMGAQLVKEVASKANDAAGDGTTTATVLAQAIVNEGLKAVAAGMNPMDLKRGIDKATAAVVAELKNLSKPCADSKAIAQVGTISANSDDSIGNIIAEAMEKVGKEGVITVEEGSGLENELSVVEGMQFDRGYLSPYFVNKPDTMVAELEGPLLLLVDKKISNIRELLPVLEAVAKAGRPLLIVAEDVEGEALATLVVNNMRGIVKVAAVKAPGFGDRRKAMLQDIAVLTGGQVISEEIGLSLETATLEHLGNAKRVILSKENTTIIDGAGADTEIEARVKQIRAQIEETSSDYDREKLQERLAKLAGGVAVIKVGAGTEVEMKEKKARVEDALHATRAAVEEGVVPGGGVALVRALAAIVDLKGENEDQNVGIALLRRAVEAPLRQITANAGDEPSVVADKVKQGSGNFGYNAATGEYGDMIEMGILDPAKVTRSALQAAASIGGLMITTEAMIADAPSEAPAGGGMPDMGGMGGMGGMM.

ATP contacts are provided by residues 30–33, Lys51, 87–91, Gly415, 479–481, and Asp495; these read TLGP, DGTTT, and NAA.

Belongs to the chaperonin (HSP60) family. Forms a cylinder of 14 subunits composed of two heptameric rings stacked back-to-back. Interacts with the co-chaperonin GroES.

It localises to the cytoplasm. The catalysed reaction is ATP + H2O + a folded polypeptide = ADP + phosphate + an unfolded polypeptide.. Together with its co-chaperonin GroES, plays an essential role in assisting protein folding. The GroEL-GroES system forms a nano-cage that allows encapsulation of the non-native substrate proteins and provides a physical environment optimized to promote and accelerate protein folding. The sequence is that of Chaperonin GroEL from Pseudomonas putida (strain GB-1).